We begin with the raw amino-acid sequence, 116 residues long: Large ribosomal subunit protein uL18 (116 aa).

The protein belongs to the universal ribosomal protein uL18 family. Part of the 50S ribosomal subunit; part of the 5S rRNA/L5/L18/L25 subcomplex. Contacts the 5S and 23S rRNAs.

This is one of the proteins that bind and probably mediate the attachment of the 5S RNA into the large ribosomal subunit, where it forms part of the central protuberance. The protein is Large ribosomal subunit protein uL18 of Pseudomonas aeruginosa (strain UCBPP-PA14).